We begin with the raw amino-acid sequence, 180 residues long: Acireductone dioxygenase (180 aa).

Fe(2+) is bound by residues His97, His99, Glu103, and His141. Residues His97, His99, Glu103, and His141 each contribute to the Ni(2+) site.

It belongs to the acireductone dioxygenase (ARD) family. As to quaternary structure, monomer. It depends on Fe(2+) as a cofactor. Ni(2+) is required as a cofactor.

The enzyme catalyses 1,2-dihydroxy-5-(methylsulfanyl)pent-1-en-3-one + O2 = 3-(methylsulfanyl)propanoate + CO + formate + 2 H(+). The catalysed reaction is 1,2-dihydroxy-5-(methylsulfanyl)pent-1-en-3-one + O2 = 4-methylsulfanyl-2-oxobutanoate + formate + 2 H(+). It participates in amino-acid biosynthesis; L-methionine biosynthesis via salvage pathway; L-methionine from S-methyl-5-thio-alpha-D-ribose 1-phosphate: step 5/6. Catalyzes 2 different reactions between oxygen and the acireductone 1,2-dihydroxy-3-keto-5-methylthiopentene (DHK-MTPene) depending upon the metal bound in the active site. Fe-containing acireductone dioxygenase (Fe-ARD) produces formate and 2-keto-4-methylthiobutyrate (KMTB), the alpha-ketoacid precursor of methionine in the methionine recycle pathway. Ni-containing acireductone dioxygenase (Ni-ARD) produces methylthiopropionate, carbon monoxide and formate, and does not lie on the methionine recycle pathway. This is Acireductone dioxygenase from Cronobacter sakazakii (strain ATCC BAA-894) (Enterobacter sakazakii).